The chain runs to 979 residues: Glutamate receptor ionotropic, kainate 5 (979 aa).

Residues 1-14 (MPAELLLLLIVAFA) form the signal peptide. The Extracellular portion of the chain corresponds to 15-544 (NPSCQVLSSL…YFSFLDPFSP (530 aa)). Disulfide bonds link Cys36–Cys292, Cys83–Cys334, and Cys165–Cys170. 10 N-linked (GlcNAc...) asparagine glycosylation sites follow: Asn219, Asn271, Asn285, Asn322, Asn372, Asn394, Asn400, Asn407, Asn414, and Asn478. Residues 545–565 (AVWLFMLLAYLAVSCVLFLAA) traverse the membrane as a helical segment. Over 566–622 (RLSPYEWYNPHPCLRARPHILENQYTLGNSLWFPVGGFMQQGSEIMPRALSTRCVSG) the chain is Cytoplasmic. The helical transmembrane segment at 623–643 (VWWAFTLIIISSYTANLAAFL) threads the bilayer. The Extracellular segment spans residues 644 to 803 (TVQRMEVPVE…HRAKGLGMEN (160 aa)). Asn735 carries N-linked (GlcNAc...) asparagine glycosylation. Residues 804-824 (IGGIFVVLICGLIIAVFVAVM) form a helical membrane-spanning segment. Residues 825–979 (EFIWSTRRSA…TGPRELTEHE (155 aa)) lie on the Cytoplasmic side of the membrane. Positions 856–867 (RKTSRSRRRRRP) are enriched in basic residues. Disordered regions lie at residues 856-875 (RKTS…RALL), 890-925 (LYSA…APTP), and 942-979 (RASG…TEHE). Positions 894-903 (GAGGDAGAHG) are enriched in gly residues. The segment covering 912-923 (PGPPGGPRPQAP) has biased composition (pro residues).

Belongs to the glutamate-gated ion channel (TC 1.A.10.1) family. GRIK5 subfamily. In terms of assembly, homotetramer. Heterotetramer with GRIK2. Can form functional heteromeric receptors with GRIK1, GRIK2 and GRIK3. Forms a heteromeric complex with GRIK2. In terms of tissue distribution, expressed in the hippocampal mossy fiber synapses (at protein level).

It localises to the cell membrane. The protein localises to the postsynaptic cell membrane. Its subcellular location is the presynaptic cell membrane. Its function is as follows. Ionotropic glutamate receptor that functions as a cation-permeable ligand-gated ion channel, gated by L-glutamate and the glutamatergic agonist kainic acid. Cannot form functional channels on its own and produces channel activity only in heteromeric assembly with GRIK2 subunit. Can form functional heteromeric receptors with GRIK1 and GRIK3. This is Glutamate receptor ionotropic, kainate 5 (Grik5) from Mus musculus (Mouse).